The primary structure comprises 234 residues: Orotidine 5'-phosphate decarboxylase (234 aa).

Substrate is bound by residues Asp10, Lys32, 59-68 (DLKLHDIPTT), Thr122, Arg184, Gln193, Gly213, and Arg214. Lys61 (proton donor) is an active-site residue.

It belongs to the OMP decarboxylase family. Type 1 subfamily. In terms of assembly, homodimer.

It catalyses the reaction orotidine 5'-phosphate + H(+) = UMP + CO2. Its pathway is pyrimidine metabolism; UMP biosynthesis via de novo pathway; UMP from orotate: step 2/2. Its function is as follows. Catalyzes the decarboxylation of orotidine 5'-monophosphate (OMP) to uridine 5'-monophosphate (UMP). The protein is Orotidine 5'-phosphate decarboxylase of Bacillus pumilus (strain SAFR-032).